The primary structure comprises 82 residues: Kappa-actitoxin-Avd4j (82 aa).

The N-terminal stretch at 1 to 19 is a signal peptide; sequence MNKALFLCLVVLCAAVVFA. A propeptide spanning residues 20–31 is cleaved from the precursor; it reads AEDLQKAKHAPF. Cystine bridges form between cysteine 38–cysteine 73, cysteine 40–cysteine 66, and cysteine 56–cysteine 74.

The protein belongs to the sea anemone type 3 (BDS) potassium channel toxin family. Weakly expressed in the ectodermal tissue from the distal and proximal tentacles, body wall, and oral disk.

It localises to the secreted. The protein resides in the nematocyst. Its function is as follows. Blocks Kv3 voltage-gated potassium channels. Reduces blood pressure. This Anemonia viridis (Snakelocks anemone) protein is Kappa-actitoxin-Avd4j.